The primary structure comprises 155 residues: MASSSSSSHRRLILAAAVLLSVLAAASASAGTSCVPGWAIPHNPLPSCRWYVTSRTCGIGPRLPWPELKRRCCRELADIPAYCRCTALSILMDGAIPPGPDAQLEGRLEDLPGCPREVQRGFAATLVTEAECNLATISGVAECPWILGGGTMPSK.

Residues 1 to 28 (MASSSSSSHRRLILAAAVLLSVLAAASA) form the signal peptide. 5 disulfides stabilise this stretch: C34–C83, C48–C72, C57–C114, C73–C132, and C85–C143. R62 is a catalytic residue. Residues 139 to 155 (GVAECPWILGGGTMPSK) constitute a propeptide, C-terminal peptide.

It belongs to the protease inhibitor I6 (cereal trypsin/alpha-amylase inhibitor) family. As to quaternary structure, monomer.

It localises to the secreted. Functionally, potent inhibitor of mammalian trypsin and a specific inhibitor of factor XIIa (activated hageman factor). The protein is Trypsin/factor XIIA inhibitor of Zea mays (Maize).